The chain runs to 217 residues: Flagellar L-ring protein 1 (217 aa).

Positions 1 to 16 (MTLARLAPLAALLLAA) are cleaved as a signal peptide. A lipid anchor (N-palmitoyl cysteine) is attached at C17. C17 carries the S-diacylglycerol cysteine lipid modification.

The protein belongs to the FlgH family. In terms of assembly, the basal body constitutes a major portion of the flagellar organelle and consists of four rings (L,P,S, and M) mounted on a central rod.

The protein resides in the cell outer membrane. The protein localises to the bacterial flagellum basal body. Functionally, assembles around the rod to form the L-ring and probably protects the motor/basal body from shearing forces during rotation. In Chromobacterium violaceum (strain ATCC 12472 / DSM 30191 / JCM 1249 / CCUG 213 / NBRC 12614 / NCIMB 9131 / NCTC 9757 / MK), this protein is Flagellar L-ring protein 1.